A 446-amino-acid polypeptide reads, in one-letter code: ATP-dependent protease ATPase subunit HslU (446 aa).

ATP is bound by residues Ile17, 59 to 64 (GVGKTE), Asp255, Glu320, and Arg392.

This sequence belongs to the ClpX chaperone family. HslU subfamily. A double ring-shaped homohexamer of HslV is capped on each side by a ring-shaped HslU homohexamer. The assembly of the HslU/HslV complex is dependent on binding of ATP.

The protein localises to the cytoplasm. ATPase subunit of a proteasome-like degradation complex; this subunit has chaperone activity. The binding of ATP and its subsequent hydrolysis by HslU are essential for unfolding of protein substrates subsequently hydrolyzed by HslV. HslU recognizes the N-terminal part of its protein substrates and unfolds these before they are guided to HslV for hydrolysis. In Pseudomonas fluorescens (strain ATCC BAA-477 / NRRL B-23932 / Pf-5), this protein is ATP-dependent protease ATPase subunit HslU.